Here is a 514-residue protein sequence, read N- to C-terminus: Histidine ammonia-lyase (514 aa).

The segment at residues 144–146 is a cross-link (5-imidazolinone (Ala-Gly)); the sequence is ASG. 2,3-didehydroalanine (Ser) is present on S145.

The protein belongs to the PAL/histidase family. Post-translationally, contains an active site 4-methylidene-imidazol-5-one (MIO), which is formed autocatalytically by cyclization and dehydration of residues Ala-Ser-Gly.

The protein localises to the cytoplasm. It catalyses the reaction L-histidine = trans-urocanate + NH4(+). Its pathway is amino-acid degradation; L-histidine degradation into L-glutamate; N-formimidoyl-L-glutamate from L-histidine: step 1/3. The sequence is that of Histidine ammonia-lyase from Rhodospirillum rubrum (strain ATCC 11170 / ATH 1.1.1 / DSM 467 / LMG 4362 / NCIMB 8255 / S1).